Consider the following 372-residue polypeptide: N-methyl-L-tryptophan oxidase (372 aa).

4 to 34 (DLIIIGSGSVGAAAGYYATRAGLKVLMTDAH) serves as a coordination point for FAD. Cys-307 carries the S-8alpha-FAD cysteine modification.

Belongs to the MSOX/MTOX family. MTOX subfamily. As to quaternary structure, monomer. It depends on FAD as a cofactor.

The enzyme catalyses N(alpha)-methyl-L-tryptophan + O2 + H2O = L-tryptophan + formaldehyde + H2O2. In terms of biological role, catalyzes the oxidative demethylation of N-methyl-L-tryptophan. The protein is N-methyl-L-tryptophan oxidase of Salmonella arizonae (strain ATCC BAA-731 / CDC346-86 / RSK2980).